Reading from the N-terminus, the 251-residue chain is MNILLTNDDGIHASGLRAIYNELVKLGHNVFPFAPTVERSGASNSVSLNVPLTTQDVYDGDFKGTAINGTPVDCVKVGLAKLHENPPDLIISGINAGHNVGTDILYSGTVAAAMEGCVAGIPSIAFSRPREEVDPTQSYAEHAANLLKKIDFSLVPKGQILNINYPSISIKKTLGIKVCAMSTQGWEHKLHKKKDDNGKPYWFISPYIPYSHGISQTDVFFLLEGWITITPLMFNMTAQTTLSNLEQHSFT.

A divalent metal cation contacts are provided by Asp8, Asp9, Ser40, and Asn95.

This sequence belongs to the SurE nucleotidase family. A divalent metal cation serves as cofactor.

Its subcellular location is the cytoplasm. The enzyme catalyses a ribonucleoside 5'-phosphate + H2O = a ribonucleoside + phosphate. Nucleotidase that shows phosphatase activity on nucleoside 5'-monophosphates. The polypeptide is 5'-nucleotidase SurE (Lawsonia intracellularis (strain PHE/MN1-00)).